Consider the following 984-residue polypeptide: Putative formate dehydrogenase SA2102 (984 aa).

In terms of domain architecture, 2Fe-2S ferredoxin-type spans 3 to 79 (EHLVVTLDGK…PMTVNTVNND (77 aa)). Cysteine 37, cysteine 48, cysteine 51, and cysteine 63 together coordinate [2Fe-2S] cluster. The 4Fe-4S His(Cys)3-ligated-type domain occupies 79–119 (DVKDAQKEALDRILEKHMLYCTVCDYNNGDCEIHNTMDAWG). [4Fe-4S] cluster is bound by residues histidine 95, cysteine 99, cysteine 102, cysteine 109, cysteine 147, cysteine 150, cysteine 153, cysteine 157, cysteine 190, cysteine 193, cysteine 196, cysteine 200, cysteine 264, cysteine 267, cysteine 271, and cysteine 299. 2 consecutive 4Fe-4S ferredoxin-type domains span residues 138–165 (PFYRYDPNQCILCGRCVEACQDIEVNET) and 181–211 (NDVPINESSCVSCGQCATVCPCNAMMEVNME). Residues 252 to 984 (MRKERIKKTK…YVFPGNQVDK (733 aa)) are formate dehydrogenase. Positions 257–313 (IKKTKTVCTYCGVGCSFEVWTKDREILKVQPSHDSPANKIATCVKGKFSWGHINSDQ) constitute a 4Fe-4S Mo/W bis-MGD-type domain.

This sequence in the C-terminal section; belongs to the prokaryotic molybdopterin-containing oxidoreductase family. Requires [2Fe-2S] cluster as cofactor. [4Fe-4S] cluster serves as cofactor. The cofactor is Mo-bis(molybdopterin guanine dinucleotide).

The enzyme catalyses formate + NAD(+) = CO2 + NADH. The sequence is that of Putative formate dehydrogenase SA2102 from Staphylococcus aureus (strain N315).